Reading from the N-terminus, the 101-residue chain is CRISPR-associated endoribonuclease Cas2 (101 aa).

Residue Asp-8 coordinates Mg(2+).

This sequence belongs to the CRISPR-associated endoribonuclease Cas2 protein family. In terms of assembly, homodimer, forms a heterotetramer with a Cas1 homodimer. Mg(2+) serves as cofactor.

Its function is as follows. CRISPR (clustered regularly interspaced short palindromic repeat), is an adaptive immune system that provides protection against mobile genetic elements (viruses, transposable elements and conjugative plasmids). CRISPR clusters contain sequences complementary to antecedent mobile elements and target invading nucleic acids. CRISPR clusters are transcribed and processed into CRISPR RNA (crRNA). Functions as a ssRNA-specific endoribonuclease. Involved in the integration of spacer DNA into the CRISPR cassette. This chain is CRISPR-associated endoribonuclease Cas2, found in Ligilactobacillus salivarius (strain UCC118) (Lactobacillus salivarius).